A 68-amino-acid chain; its full sequence is Serine rich endogenous peptide 22 (68 aa).

The N-terminal stretch at 1–25 is a signal peptide; it reads MNKALVWLITLLFLIFSATPNRVLA. Positions 50–64 match the SCOOP motif motif; the sequence is KIGVGASNSGHSPGA. The short motif at 56-58 is the SxS motif essential for MIK2 binding element; sequence SNS.

The protein belongs to the serine rich endogenous peptide (SCOOP) phytocytokine family. As to quaternary structure, interacts with MIK2 (via extracellular leucine-rich repeat domain); this interaction triggers the formation of complex between MIK2 and the BAK1/SERK3 and SERK4 coreceptors, and subsequent BAK1 activation by phosphorylation.

It is found in the cell membrane. The protein localises to the secreted. It localises to the extracellular space. Its subcellular location is the apoplast. Its function is as follows. Brassicaceae-specific phytocytokine (plant endogenous peptide released into the apoplast) perceived by MIK2 in a BAK1/SERK3 and SERK4 coreceptors-dependent manner, that modulates various physiological and antimicrobial processes including growth prevention and reactive oxygen species (ROS) response regulation. The chain is Serine rich endogenous peptide 22 from Arabidopsis thaliana (Mouse-ear cress).